The primary structure comprises 706 residues: Putative pentatricopeptide repeat-containing protein At3g47840 (706 aa).

16 PPR repeats span residues 39–69 (VKFD…MPHG), 70–104 (DIVS…DHAV), 107–141 (DTSV…SLLS), 142–172 (SVYV…MPFR), 173–203 (NAVT…MSRS), 208–242 (DTYT…GFVT), 243–273 (TLCV…MSER), 274–308 (DVVS…QVPP), 309–343 (NEQT…GLND), 344–374 (SLSV…MRCR), 375–409 (DIIS…GTKP), 410–444 (TDFA…GLEQ), 445–475 (NSTV…TDRD), 476–510 (DIVS…GFRP), 511–541 (DSVT…MQET), and 547–577 (AKEH…MSWK). The segment at 582-657 (VWTTLLIACK…EPGWSSIKIK (76 aa)) is type E motif. The tract at residues 658–688 (DCVSAFVSGDRFHPQSEDIYNILELAVSGAE) is type E(+) motif.

It belongs to the PPR family. PCMP-E subfamily.

The protein is Putative pentatricopeptide repeat-containing protein At3g47840 (PCMP-E43) of Arabidopsis thaliana (Mouse-ear cress).